A 35-amino-acid chain; its full sequence is Photosystem II reaction center protein M (35 aa).

Residues 5–25 form a helical membrane-spanning segment; the sequence is ILAFIATALFILVPTAFLLII.

Belongs to the PsbM family. In terms of assembly, PSII is composed of 1 copy each of membrane proteins PsbA, PsbB, PsbC, PsbD, PsbE, PsbF, PsbH, PsbI, PsbJ, PsbK, PsbL, PsbM, PsbT, PsbX, PsbY, PsbZ, Psb30/Ycf12, at least 3 peripheral proteins of the oxygen-evolving complex and a large number of cofactors. It forms dimeric complexes.

The protein resides in the plastid. The protein localises to the chloroplast thylakoid membrane. In terms of biological role, one of the components of the core complex of photosystem II (PSII). PSII is a light-driven water:plastoquinone oxidoreductase that uses light energy to abstract electrons from H(2)O, generating O(2) and a proton gradient subsequently used for ATP formation. It consists of a core antenna complex that captures photons, and an electron transfer chain that converts photonic excitation into a charge separation. This subunit is found at the monomer-monomer interface. The sequence is that of Photosystem II reaction center protein M from Amborella trichopoda.